A 298-amino-acid polypeptide reads, in one-letter code: Foldase protein PrsA 1 (298 aa).

The first 23 residues, 1 to 23 (MNKTWKKAATVLAFAGIALSATA), serve as a signal peptide directing secretion. A lipid anchor (N-palmitoyl cysteine) is attached at Cys-24. Cys-24 carries S-diacylglycerol cysteine lipidation. Residues 141–234 (QPEVTVQHIL…YGYHVIKMIK (94 aa)) enclose the PpiC domain.

The protein belongs to the PrsA family.

It is found in the cell membrane. The enzyme catalyses [protein]-peptidylproline (omega=180) = [protein]-peptidylproline (omega=0). Functionally, plays a major role in protein secretion by helping the post-translocational extracellular folding of several secreted proteins. The sequence is that of Foldase protein PrsA 1 (prsA1) from Lactobacillus johnsonii (strain CNCM I-12250 / La1 / NCC 533).